Reading from the N-terminus, the 161-residue chain is Small ribosomal subunit protein uS9 (161 aa).

It belongs to the universal ribosomal protein uS9 family.

This Bartonella tribocorum (strain CIP 105476 / IBS 506) protein is Small ribosomal subunit protein uS9.